Here is a 552-residue protein sequence, read N- to C-terminus: Glutamine--tRNA ligase (552 aa).

A 'HIGH' region motif is present at residues 34-44 (PEPNGYLHIGH). ATP is bound by residues 35–37 (EPN) and 41–47 (HIGHAKS). Asp67 and Tyr212 together coordinate L-glutamine. ATP contacts are provided by residues Thr231, 261 to 262 (RL), and 269 to 271 (MSK). Residues 268–272 (VMSKR) carry the 'KMSKS' region motif.

Belongs to the class-I aminoacyl-tRNA synthetase family. As to quaternary structure, monomer.

The protein resides in the cytoplasm. It catalyses the reaction tRNA(Gln) + L-glutamine + ATP = L-glutaminyl-tRNA(Gln) + AMP + diphosphate. This chain is Glutamine--tRNA ligase, found in Aliivibrio fischeri (strain MJ11) (Vibrio fischeri).